A 376-amino-acid chain; its full sequence is Cobalt-precorrin-5B C(1)-methyltransferase (376 aa).

The segment at 353 to 376 (KGRTTSTPSHQPAPSSFGDRNRRT) is disordered. The span at 355–366 (RTTSTPSHQPAP) shows a compositional bias: polar residues.

Belongs to the CbiD family.

The catalysed reaction is Co-precorrin-5B + S-adenosyl-L-methionine = Co-precorrin-6A + S-adenosyl-L-homocysteine. It participates in cofactor biosynthesis; adenosylcobalamin biosynthesis; cob(II)yrinate a,c-diamide from sirohydrochlorin (anaerobic route): step 6/10. Its function is as follows. Catalyzes the methylation of C-1 in cobalt-precorrin-5B to form cobalt-precorrin-6A. This Agrobacterium fabrum (strain C58 / ATCC 33970) (Agrobacterium tumefaciens (strain C58)) protein is Cobalt-precorrin-5B C(1)-methyltransferase.